The sequence spans 341 residues: UDP-3-O-acylglucosamine N-acyltransferase (341 aa).

H242 functions as the Proton acceptor in the catalytic mechanism.

The protein belongs to the transferase hexapeptide repeat family. LpxD subfamily. In terms of assembly, homotrimer.

The catalysed reaction is a UDP-3-O-[(3R)-3-hydroxyacyl]-alpha-D-glucosamine + a (3R)-hydroxyacyl-[ACP] = a UDP-2-N,3-O-bis[(3R)-3-hydroxyacyl]-alpha-D-glucosamine + holo-[ACP] + H(+). It participates in bacterial outer membrane biogenesis; LPS lipid A biosynthesis. Its function is as follows. Catalyzes the N-acylation of UDP-3-O-acylglucosamine using 3-hydroxyacyl-ACP as the acyl donor. Is involved in the biosynthesis of lipid A, a phosphorylated glycolipid that anchors the lipopolysaccharide to the outer membrane of the cell. The protein is UDP-3-O-acylglucosamine N-acyltransferase of Haemophilus influenzae (strain ATCC 51907 / DSM 11121 / KW20 / Rd).